The following is an 827-amino-acid chain: Putative transcriptional regulatory protein C16G5.16 (827 aa).

The zn(2)-C6 fungal-type DNA-binding region spans 16 to 42 (CDECHRRKIKCDQRRPCSNCIAYNYEC). 3 disordered regions span residues 80–114 (LKLP…SSQD), 158–193 (TVPN…HKKP), and 794–827 (QPPS…KRTE). Positions 102–112 (KRSDSSKRSSS) are enriched in basic and acidic residues. Position 112 is a phosphoserine (Ser112). 2 stretches are compositionally biased toward low complexity: residues 159–179 (VPNP…LSFP) and 811–827 (SNNS…KRTE).

This sequence belongs to the ASG1 family.

It localises to the cytoplasm. Its subcellular location is the nucleus. The polypeptide is Putative transcriptional regulatory protein C16G5.16 (Schizosaccharomyces pombe (strain 972 / ATCC 24843) (Fission yeast)).